A 464-amino-acid polypeptide reads, in one-letter code: Integrator complex subunit 12 (464 aa).

Positions 42 to 98 (GNDSVYRPQPKEVEQPKAMLSKVKPETKASSSTPSSSILSKPLASEKVKKEAEKRTA) are disordered. The span at 69-84 (KASSSTPSSSILSKPL) shows a compositional bias: low complexity. Positions 85–98 (ASEKVKKEAEKRTA) are enriched in basic and acidic residues. The segment at 156–212 (GLACVVCRQMTVFSGNQLVECQECHNLYHQDCHRPQVTDKDVNDPRLVWYCARCTRQ) adopts a PHD-type zinc-finger fold. 2 disordered regions span residues 216–252 (MAQK…LKSK) and 312–445 (TNSQ…SQLN). Over residues 227-239 (PAPSAVSAVTPVA) the composition is skewed to low complexity. Residues 312 to 329 (TNSQATSGKPPSLSSVQK) are compositionally biased toward polar residues. Over residues 339 to 371 (SKAGSVSKSGSGGSSSTIPLKPLPPLILGKTGL) the composition is skewed to low complexity. Over residues 372–382 (SRSMSSDNVSK) the composition is skewed to polar residues. The span at 384–421 (GLPSPNPSSSGSVSSLSSQLGSNNGSSNTAGSNVNSSN) shows a compositional bias: low complexity. Residues 428-445 (SMQQSGAKGPTSQESQLN) are compositionally biased toward polar residues.

Belongs to the Integrator subunit 12 family. Component of the Integrator complex, composed of core subunits INTS1, INTS2, INTS3, INTS4, INTS5, INTS6, INTS7, INTS8, INTS9/RC74, INTS10, INTS11/CPSF3L, INTS12, INTS13, INTS14 and INTS15. The core complex associates with protein phosphatase 2A subunits PPP2CA and PPP2R1A, to form the Integrator-PP2A (INTAC) complex.

It is found in the nucleus. In terms of biological role, component of the integrator complex, a multiprotein complex that terminates RNA polymerase II (Pol II) transcription in the promoter-proximal region of genes. The integrator complex provides a quality checkpoint during transcription elongation by driving premature transcription termination of transcripts that are unfavorably configured for transcriptional elongation: the complex terminates transcription by (1) catalyzing dephosphorylation of the C-terminal domain (CTD) of Pol II subunit POLR2A/RPB1 and SUPT5H/SPT5, (2) degrading the exiting nascent RNA transcript via endonuclease activity and (3) promoting the release of Pol II from bound DNA. The integrator complex is also involved in terminating the synthesis of non-coding Pol II transcripts, such as enhancer RNAs (eRNAs), small nuclear RNAs (snRNAs), telomerase RNAs and long non-coding RNAs (lncRNAs). This Xenopus laevis (African clawed frog) protein is Integrator complex subunit 12 (ints12).